Reading from the N-terminus, the 112-residue chain is Integration host factor subunit alpha (112 aa).

This sequence belongs to the bacterial histone-like protein family. In terms of assembly, heterodimer of an alpha and a beta chain.

Functionally, this protein is one of the two subunits of integration host factor, a specific DNA-binding protein that functions in genetic recombination as well as in transcriptional and translational control. The sequence is that of Integration host factor subunit alpha from Rhizobium johnstonii (strain DSM 114642 / LMG 32736 / 3841) (Rhizobium leguminosarum bv. viciae).